A 184-amino-acid chain; its full sequence is NADH-quinone oxidoreductase subunit B (184 aa).

[4Fe-4S] cluster-binding residues include cysteine 37, cysteine 38, cysteine 103, and cysteine 132.

It belongs to the complex I 20 kDa subunit family. In terms of assembly, NDH-1 is composed of 14 different subunits. Subunits NuoB, C, D, E, F, and G constitute the peripheral sector of the complex. It depends on [4Fe-4S] cluster as a cofactor.

The protein resides in the cell membrane. The catalysed reaction is a quinone + NADH + 5 H(+)(in) = a quinol + NAD(+) + 4 H(+)(out). In terms of biological role, NDH-1 shuttles electrons from NADH, via FMN and iron-sulfur (Fe-S) centers, to quinones in the respiratory chain. The immediate electron acceptor for the enzyme in this species is believed to be a menaquinone. Couples the redox reaction to proton translocation (for every two electrons transferred, four hydrogen ions are translocated across the cytoplasmic membrane), and thus conserves the redox energy in a proton gradient. The protein is NADH-quinone oxidoreductase subunit B of Rhodococcus jostii (strain RHA1).